We begin with the raw amino-acid sequence, 270 residues long: Plasmanylethanolamine desaturase 1 (270 aa).

The next 3 helical transmembrane spans lie at 47–67 (WCSV…LLLL), 74–94 (PLVI…SGLV), and 161–181 (ALEQ…FGTF). The Histidine box-1 motif lies at 186-190 (HKWSH). The Histidine box-2 signature appears at 213–217 (HHRIH).

The protein belongs to the fatty acid desaturase CarF family.

The protein localises to the endoplasmic reticulum membrane. The enzyme catalyses a 1-(1,2-saturated alkyl)-2-acyl-sn-glycero-3-phosphoethanolamine + 2 Fe(II)-[cytochrome b5] + O2 + 2 H(+) = a 1-O-(1Z-alkenyl)-2-acyl-sn-glycero-3-phosphoethanolamine + 2 Fe(III)-[cytochrome b5] + 2 H2O. It catalyses the reaction a 1-O-hexadecyl-2-acyl-sn-glycero-3-phosphoethanolamine + 2 Fe(II)-[cytochrome b5] + O2 + 2 H(+) = a 1-O-(1Z-hexadecenyl)-2-acyl-sn-glycero-3-phosphoethanolamine + 2 Fe(III)-[cytochrome b5] + 2 H2O. It carries out the reaction a 1-O-octadecyl-2-acyl-sn-glycero-3-phosphoethanolamine + 2 Fe(II)-[cytochrome b5] + O2 + 2 H(+) = a 1-O-(1Z-octadecenyl)-2-acyl-sn-glycero-3-phosphoethanolamine + 2 Fe(III)-[cytochrome b5] + 2 H2O. The catalysed reaction is a 1-O-(9Z-octadecenyl)-2-acyl-sn-glycero-3-phosphoethanolamine + 2 Fe(II)-[cytochrome b5] + O2 + 2 H(+) = a 1-O-(1Z,9Z-octadecadienyl)-2-acyl-sn-glycero-3-phosphoethanolamine + 2 Fe(III)-[cytochrome b5] + 2 H2O. It participates in lipid metabolism; fatty acid metabolism. Plasmanylethanolamine desaturase involved in plasmalogen biogenesis in the endoplasmic reticulum membrane. Plasmalogens are glycerophospholipids with a hydrocarbon chain linked by a vinyl ether bond at the glycerol sn-1 position, and are involved in antioxidative and signaling mechanisms. The chain is Plasmanylethanolamine desaturase 1 from Homo sapiens (Human).